Consider the following 330-residue polypeptide: Aspartate--ammonia ligase (330 aa).

It belongs to the class-II aminoacyl-tRNA synthetase family. AsnA subfamily.

Its subcellular location is the cytoplasm. The enzyme catalyses L-aspartate + NH4(+) + ATP = L-asparagine + AMP + diphosphate + H(+). Its pathway is amino-acid biosynthesis; L-asparagine biosynthesis; L-asparagine from L-aspartate (ammonia route): step 1/1. This Shigella flexneri serotype 5b (strain 8401) protein is Aspartate--ammonia ligase.